A 372-amino-acid chain; its full sequence is uncharacterized protein (372 aa).

4–18 (YIIVGAGILGASTAY) contributes to the FAD binding site.

The protein belongs to the DadA oxidoreductase family. It depends on FAD as a cofactor.

This is an uncharacterized protein from Bacillus subtilis (strain 168).